Consider the following 633-residue polypeptide: Glutamyl-tRNA(Gln) amidotransferase subunit E (633 aa).

The disordered stretch occupies residues 415 to 437 (LDDGTTKFLRPQPGSARMYPETD).

It belongs to the GatB/GatE family. GatE subfamily. As to quaternary structure, heterodimer of GatD and GatE.

It carries out the reaction L-glutamyl-tRNA(Gln) + L-glutamine + ATP + H2O = L-glutaminyl-tRNA(Gln) + L-glutamate + ADP + phosphate + H(+). In terms of biological role, allows the formation of correctly charged Gln-tRNA(Gln) through the transamidation of misacylated Glu-tRNA(Gln) in organisms which lack glutaminyl-tRNA synthetase. The reaction takes place in the presence of glutamine and ATP through an activated gamma-phospho-Glu-tRNA(Gln). The GatDE system is specific for glutamate and does not act on aspartate. The sequence is that of Glutamyl-tRNA(Gln) amidotransferase subunit E from Saccharolobus solfataricus (strain ATCC 35092 / DSM 1617 / JCM 11322 / P2) (Sulfolobus solfataricus).